The chain runs to 308 residues: Nodulation protein D 1 (308 aa).

The HTH lysR-type domain occupies 6–63 (LDLNLLVALDALMTERNLTAAARSINLSQPAMSAAVGRLRVYFEDELFTMNGRELVLT). The segment at residues 23–42 (LTAAARSINLSQPAMSAAVG) is a DNA-binding region (H-T-H motif).

This sequence belongs to the LysR transcriptional regulatory family.

Its function is as follows. NodD regulates the expression of the nodABCFE genes which encode other nodulation proteins. NodD is also a negative regulator of its own expression. Binds flavonoids as inducers. The sequence is that of Nodulation protein D 1 (nodD1) from Rhizobium tropici.